Here is a 357-residue protein sequence, read N- to C-terminus: MNLCRECYGIIGEGVVAEKCEACCNAFDRVEEFAEEIVKKMSEYEFETFNVGSRVWGSLKALQEYLSLKGIEYEIKQRFNTKLARAIEEKTGSKRTLNPDITVLFDLETFTFELQIRPVFIYGRYLKRVRNISQTRWLCGYCNGEGCEVCNFTGKKYVSSVEELIAMPAVRLFKARDAKLHGAGREDVDARMLGTGRPFVLEVIEPRKRFVDLKELEEAINSQKWVAVRDLEYTDAEKVREVKTERHRKTYRAKVVFEEKVERERLIEALESLKGEIRQRTPMRVSHRRADRVRVRRLYDARLIHHTGRVAVVEFEAEAGLYIKELVSGDNGRTRPSLAEKVGVNARVDRLDVIAVS.

Residues 1 to 118 form the THUMP domain; the sequence is MNLCRECYGI…TFTFELQIRP (118 aa). The active-site Nucleophile is the Asp-187. Positions 251 and 322 each coordinate substrate.

It belongs to the pseudouridine synthase Pus10 family.

It carries out the reaction uridine(54) in tRNA = pseudouridine(54) in tRNA. The enzyme catalyses uridine(55) in tRNA = pseudouridine(55) in tRNA. Its function is as follows. Responsible for synthesis of pseudouridine from uracil-54 and uracil-55 in the psi GC loop of transfer RNAs. The chain is tRNA pseudouridine synthase Pus10 from Archaeoglobus fulgidus (strain ATCC 49558 / DSM 4304 / JCM 9628 / NBRC 100126 / VC-16).